A 233-amino-acid chain; its full sequence is MSIECHNAFILHRRPYRETSQLIDLFCQDVGKVSLVYKGGRSSTRMRRGTAQPFTLLQVSYFGRGSLKTVKSFEAQTQVVPLVGQRLFLAMYINELLYRLLQAETACDGLFECYQQTLLAIAGAVDPQIALRLFELTLIETLGYGVNFSEDIYSGELIESGYEYQYQHQAGFFAKQAIHKQHDVYSGQDILALAQRDFSNQNVLKSAKRFCRQALANLLGGKPLHSRALFTAK.

It belongs to the RecO family.

Involved in DNA repair and RecF pathway recombination. The protein is DNA repair protein RecO of Psychromonas ingrahamii (strain DSM 17664 / CCUG 51855 / 37).